Reading from the N-terminus, the 430-residue chain is Enolase (430 aa).

Q163 serves as a coordination point for (2R)-2-phosphoglycerate. The Proton donor role is filled by E205. Mg(2+)-binding residues include D242, E288, and D315. K340, R369, S370, and K391 together coordinate (2R)-2-phosphoglycerate. The active-site Proton acceptor is the K340.

It belongs to the enolase family. Mg(2+) serves as cofactor.

The protein localises to the cytoplasm. The protein resides in the secreted. It localises to the cell surface. It carries out the reaction (2R)-2-phosphoglycerate = phosphoenolpyruvate + H2O. It functions in the pathway carbohydrate degradation; glycolysis; pyruvate from D-glyceraldehyde 3-phosphate: step 4/5. Functionally, catalyzes the reversible conversion of 2-phosphoglycerate (2-PG) into phosphoenolpyruvate (PEP). It is essential for the degradation of carbohydrates via glycolysis. The protein is Enolase of Aster yellows witches'-broom phytoplasma (strain AYWB).